Here is a 183-residue protein sequence, read N- to C-terminus: Adenine phosphoribosyltransferase (183 aa).

This sequence belongs to the purine/pyrimidine phosphoribosyltransferase family. In terms of assembly, homodimer.

The protein localises to the cytoplasm. It carries out the reaction AMP + diphosphate = 5-phospho-alpha-D-ribose 1-diphosphate + adenine. It functions in the pathway purine metabolism; AMP biosynthesis via salvage pathway; AMP from adenine: step 1/1. Catalyzes a salvage reaction resulting in the formation of AMP, that is energically less costly than de novo synthesis. The chain is Adenine phosphoribosyltransferase from Shewanella oneidensis (strain ATCC 700550 / JCM 31522 / CIP 106686 / LMG 19005 / NCIMB 14063 / MR-1).